The sequence spans 146 residues: Hemoglobin subunit beta-2 (146 aa).

Positions 2–146 (KWTDKERAVI…VVSALGKQYC (145 aa)) constitute a Globin domain. Residues His-63 and His-92 each coordinate heme b.

The protein belongs to the globin family. As to quaternary structure, heterotetramer of two alpha chains and two beta chains. Red blood cells.

Its function is as follows. Involved in oxygen transport from gills to the various peripheral tissues. The protein is Hemoglobin subunit beta-2 (hbb2) of Lycodes reticulatus (Arctic eelpout).